The sequence spans 999 residues: MMGLFPRTTGALAIFVVVILVHGELRIETKGQYDEEEMTMQQAKRRQKREWVKFAKPCREGEDNSKRNPIAKITSDYQATQKITYRISGVGIDQPPFGIFVVDKNTGDINITAIVDREETPSFLITCRALNAQGLDVEKPLILTVKILDINDNPPVFSQQIFMGEIEENSASNSLVMILNATDADEPNHLNSKIAFKIVSQEPAGTPMFLLSRNTGEVRTLTNSLDREQASSYRLVVSGADKDGEGLSTQCECNIKVKDVNDNFPMFRDSQYSARIEENILSSELLRFQVTDLDEEYTDNWLAVYFFTSGNEGNWFEIQTDPRTNEGILKVVKALDYEQLQSVKLSIAVKNKAEFHQSVISRYRVQSTPVTIQVINVREGIAFRPASKTFTVQKGISSKKLVDYILGTYQAIDEDTNKAASNVKYVMGRNDGGYLMIDSKTAEIKFVKNMNRDSTFIVNKTITAEVLAIDEYTGKTSTGTVYVRVPDFNDNCPTAVLEKDAVCSSSPSVVVSARTLNNRYTGPYTFALEDQPVKLPAVWSITTLNATSALLRAQEQIPPGVYHISLVLTDSQNNRCEMPRSLTLEVCQCDNRGICGTSYPTTSPGTRYGRPHSGRLGPAAIGLLLLGLLLLLLAPLLLLTCDCGAGSTGGVTGGFIPVPDGSEGTIHQWGIEGAHPEDKEITNICVPPVTANGADFMESSEVCTNTYARGTAVEGTSGMEMTTKLGAATESGGAAGFATGTVSGAASGFGAATGVGICSSGQSGTMRTRHSTGGTNKDYADGAISMNFLDSYFSQKAFACAEEDDGQEANDCLLIYDNEGADATGSPVGSVGCCSFIADDLDDSFLDSLGPKFKKLAEISLGVDGEGKEVQPPSKDSGYGIESCGHPIEVQQTGFVKCQTLSGSQGASALSTSGSVQPAVSIPDPLQHGNYLVTETYSASGSLVQPSTAGFDPLLTQNVIVTERVICPISSVPGNLAGPTQLRGSHTMLCTEDPCSRLI.

An N-terminal signal peptide occupies residues 1-23 (MMGLFPRTTGALAIFVVVILVHG). A propeptide spanning residues 24 to 49 (ELRIETKGQYDEEEMTMQQAKRRQKR) is cleaved from the precursor. Cadherin domains follow at residues 50–158 (EWVK…PVFS), 159–268 (QQIF…PMFR), 269–383 (DSQY…GIAF), and 386–499 (ASKT…VLEK). At 50-615 (EWVKFAKPCR…TRYGRPHSGR (566 aa)) the chain is on the extracellular side. 2 N-linked (GlcNAc...) asparagine glycosylation sites follow: asparagine 110 and asparagine 180. Asparagine 459 and asparagine 545 each carry an N-linked (GlcNAc...) asparagine glycan. Residues 616–640 (LGPAAIGLLLLGLLLLLLAPLLLLT) form a helical membrane-spanning segment. Residues 641–999 (CDCGAGSTGG…CTEDPCSRLI (359 aa)) lie on the Cytoplasmic side of the membrane. Residues 642 to 714 (DCGAGSTGGV…NTYARGTAVE (73 aa)) form a required for interaction with CTNND1 and localization at cell-cell junctions region. Desmoglein repeat repeat units lie at residues 910–935 (LSTS…LVTE) and 936–966 (TYSA…ERVI).

Homodimer. Part of a complex that contains DSG3, PKP1, YAP1 and YWHAG; the complex is required for localization of DSG3 and YAP1 to the cell membrane in keratinocytes. Interacts with PKP2. Interacts with CTNND1; the interaction facilitates DSG3 localization and retention at cell-cell junctions. Interacts with CDH1; the interaction is required for CDH1 localization to developing adherens junctions. Interacts with RAC1; the interaction is required for DSG3 translocation to cell-cell junctions, organization of cortical F-actin bundles and actin anchoring at cell-cell junctions. Interacts with DSC3; the interaction may limit the interaction of DSC3 with p38MAPK family members and therefore repress p38MAPK signaling activation. As to expression, expressed throughout the basal and spinous layer of the epidermis with weak expression in the granular layer (at protein level). Expressed in skin and mucosa (at protein level). Expressed in the basal layer of the outer root sheath of the telogen hair club, specifically at the cell membrane between the apex of the cells and the surrounding hair club (at protein level). Expression is less abundant between the lateral margins of the outer root sheath basal cells (at protein level). Also expressed in the tongue, tonsil and esophagus.

It localises to the cell membrane. Its subcellular location is the cell junction. The protein resides in the desmosome. It is found in the cytoplasm. The protein localises to the tight junction. A component of desmosome cell-cell junctions which are required for positive regulation of cellular adhesion. Required for adherens and desmosome junction assembly in response to mechanical force in keratinocytes. Required for desmosome-mediated cell-cell adhesion of cells surrounding the telogen hair club and the basal layer of the outer root sheath epithelium, consequently is essential for the anchoring of telogen hairs in the hair follicle. Required for the maintenance of the epithelial barrier via promoting desmosome-mediated intercellular attachment of suprabasal epithelium to basal cells. May play a role in the protein stability of the desmosome plaque components DSP, JUP, PKP1, PKP2 and PKP3. Required for YAP1 localization at the plasma membrane in keratinocytes in response to mechanical strain, via the formation of an interaction complex composed of DSG3, PKP1 and YWHAG. May also be involved in the positive regulation of YAP1 target gene transcription and as a result cell proliferation. Positively regulates cellular contractility and cell junction formation via organization of cortical F-actin bundles and anchoring of actin to tight junctions, in conjunction with RAC1. The cytoplasmic pool of DSG3 is required for the localization of CDH1 and CTNNB1 at developing adherens junctions, potentially via modulation of SRC activity. Inhibits keratinocyte migration via suppression of p38MAPK signaling, may therefore play a role in moderating wound healing. In Homo sapiens (Human), this protein is Desmoglein-3.